Consider the following 128-residue polypeptide: Orchestin (128 aa).

Residues 1 to 20 form the signal peptide; sequence MNKVFIIGVCLFIVSQAVLA. Positions 23–95 are disordered; it reads WDSDESSDER…DEDSDDSQES (73 aa). Composition is skewed to basic and acidic residues over residues 30 to 49 and 56 to 81; these read DERLSDRSDESREEPRKLVV and EDSNESAEVRRRDDSRESEEEPRKLS. Positions 84 to 93 are enriched in acidic residues; sequence TSDEDSDDSQ.

Post-translationally, phosphorylated on Ser and Tyr residues. Calcium-binding activity is dependent on serine phosphorylation but not on tyrosine phosphorylation. In terms of tissue distribution, posterior caeca epithelium of the gut.

Its subcellular location is the secreted. Its function is as follows. Plays a role in cuticle calcification. May induce precipitation of the calcium stored in the posterior caeca as calcium carbonate. The sequence is that of Orchestin from Cryptorchestia cavimana (Amphipod).